The sequence spans 320 residues: Polynucleotide 5'-triphosphatase CTL1 (320 aa).

The span at 1-12 (MSDQPETPSNSR) shows a compositional bias: polar residues. Residues 1 to 23 (MSDQPETPSNSRNSHENVGAKKA) form a disordered region. The segment covering 13-23 (NSHENVGAKKA) has biased composition (basic and acidic residues).

The protein belongs to the fungal TPase family. Mg(2+) is required as a cofactor. It depends on Mn(2+) as a cofactor.

Its subcellular location is the cytoplasm. The protein localises to the nucleus. The enzyme catalyses a 5'-end triphospho-ribonucleoside in mRNA + H2O = a 5'-end diphospho-ribonucleoside in mRNA + phosphate + H(+). In terms of biological role, probably involved in an RNA processing event other than mRNA capping. Releases gamma-phosphate from the 5'-end of RNA to produce a diphosphate terminus. This chain is Polynucleotide 5'-triphosphatase CTL1, found in Saccharomyces cerevisiae (strain ATCC 204508 / S288c) (Baker's yeast).